A 482-amino-acid polypeptide reads, in one-letter code: Glutamate--tRNA ligase 1 (482 aa).

The 'HIGH' region signature appears at 18-28 (PSPTGYLHLGG). The 'KMSKS' region motif lies at 252 to 256 (KLSKR). Residue lysine 255 participates in ATP binding.

The protein belongs to the class-I aminoacyl-tRNA synthetase family. Glutamate--tRNA ligase type 1 subfamily. In terms of assembly, monomer.

The protein resides in the cytoplasm. It catalyses the reaction tRNA(Glu) + L-glutamate + ATP = L-glutamyl-tRNA(Glu) + AMP + diphosphate. In terms of biological role, catalyzes the attachment of glutamate to tRNA(Glu) in a two-step reaction: glutamate is first activated by ATP to form Glu-AMP and then transferred to the acceptor end of tRNA(Glu). The protein is Glutamate--tRNA ligase 1 of Erythrobacter litoralis (strain HTCC2594).